The following is a 129-amino-acid chain: uncharacterized protein (129 aa).

Residues 1-21 (MAQNKTIAVALLLATLVAVMG) form the signal peptide.

This is an uncharacterized protein from Oryza sativa subsp. japonica (Rice).